Reading from the N-terminus, the 164-residue chain is 3-isopropylmalate dehydratase small subunit (164 aa).

It belongs to the LeuD family. LeuD type 2 subfamily. In terms of assembly, heterodimer of LeuC and LeuD.

It catalyses the reaction (2R,3S)-3-isopropylmalate = (2S)-2-isopropylmalate. It participates in amino-acid biosynthesis; L-leucine biosynthesis; L-leucine from 3-methyl-2-oxobutanoate: step 2/4. Its function is as follows. Catalyzes the isomerization between 2-isopropylmalate and 3-isopropylmalate, via the formation of 2-isopropylmaleate. This Lachnospira eligens (strain ATCC 27750 / DSM 3376 / VPI C15-48 / C15-B4) (Eubacterium eligens) protein is 3-isopropylmalate dehydratase small subunit.